Reading from the N-terminus, the 113-residue chain is uncharacterized protein (113 aa).

The next 3 helical transmembrane spans lie at 9–31, 36–58, and 71–90; these read IFPS…SVIY, VLTI…YKFQ, and IMAL…VVAV.

The protein localises to the cell membrane. This is an uncharacterized protein from Archaeoglobus fulgidus (strain ATCC 49558 / DSM 4304 / JCM 9628 / NBRC 100126 / VC-16).